We begin with the raw amino-acid sequence, 446 residues long: Exodeoxyribonuclease 7 large subunit (446 aa).

This sequence belongs to the XseA family. Heterooligomer composed of large and small subunits.

The protein localises to the cytoplasm. It catalyses the reaction Exonucleolytic cleavage in either 5'- to 3'- or 3'- to 5'-direction to yield nucleoside 5'-phosphates.. Functionally, bidirectionally degrades single-stranded DNA into large acid-insoluble oligonucleotides, which are then degraded further into small acid-soluble oligonucleotides. In Geotalea uraniireducens (strain Rf4) (Geobacter uraniireducens), this protein is Exodeoxyribonuclease 7 large subunit.